A 383-amino-acid chain; its full sequence is Galactokinase (383 aa).

34–37 lines the substrate pocket; the sequence is EHTD. 124–130 contributes to the ATP binding site; that stretch reads GAGLSSS. Serine 130 and glutamate 162 together coordinate Mg(2+). Residue aspartate 174 is the Proton acceptor of the active site. Position 223 (tyrosine 223) interacts with substrate.

It belongs to the GHMP kinase family. GalK subfamily.

The protein resides in the cytoplasm. The enzyme catalyses alpha-D-galactose + ATP = alpha-D-galactose 1-phosphate + ADP + H(+). The protein operates within carbohydrate metabolism; galactose metabolism. Catalyzes the transfer of the gamma-phosphate of ATP to D-galactose to form alpha-D-galactose-1-phosphate (Gal-1-P). In Yersinia pseudotuberculosis serotype IB (strain PB1/+), this protein is Galactokinase.